Reading from the N-terminus, the 125-residue chain is Large ribosomal subunit protein bL12 (125 aa).

It belongs to the bacterial ribosomal protein bL12 family. Homodimer. Part of the ribosomal stalk of the 50S ribosomal subunit. Forms a multimeric L10(L12)X complex, where L10 forms an elongated spine to which 2 to 4 L12 dimers bind in a sequential fashion. Binds GTP-bound translation factors.

In terms of biological role, forms part of the ribosomal stalk which helps the ribosome interact with GTP-bound translation factors. Is thus essential for accurate translation. The sequence is that of Large ribosomal subunit protein bL12 from Campylobacter jejuni subsp. jejuni serotype O:2 (strain ATCC 700819 / NCTC 11168).